Consider the following 448-residue polypeptide: Gametocyte surface protein P45/48 (448 aa).

Residues 1–27 (MMLYISAKKAQVAFILYIVLVLRIISG) form the signal peptide. The region spanning 45 to 182 (IGYKCNFSNE…AMVHVRVLKY (138 aa)) is the 6-Cys 1 domain. Intrachain disulfides connect Cys49–Cys71 and Cys102–Cys156. 7 N-linked (GlcNAc...) asparagine glycosylation sites follow: Asn50, Asn131, Asn190, Asn204, Asn254, Asn299, and Asn303. In terms of domain architecture, 6-Cys 2 spans 294–426 (VIHGCNFSSN…KSAYMTVTID (133 aa)). 3 cysteine pairs are disulfide-bonded: Cys298-Cys327, Cys344-Cys412, and Cys352-Cys410. Asp426 carries the GPI-anchor amidated aspartate lipid modification. Residues 427 to 448 (SAYYGFLAKTFIFLIVAILLYI) constitute a propeptide, removed in mature form.

In terms of assembly, heterodimer; heterodimerizes with PF230.

It localises to the cell surface. Its subcellular location is the cell membrane. Its function is as follows. Gametocyte surface protein required for male fertility. In Plasmodium falciparum (isolate 3D7), this protein is Gametocyte surface protein P45/48 (PF45/48).